The primary structure comprises 527 residues: uncharacterized protein (527 aa).

The PE domain maps to 1 to 93; the sequence is MSYMIAVPDM…AGAYASAEAT (93 aa). 3 stretches are compositionally biased toward gly residues: residues 264 to 286, 292 to 384, and 472 to 515; these read IHGH…GVQG, GAAG…AGNG, and NGGD…GGSR. Disordered regions lie at residues 264-384 and 472-527; these read IHGH…AGNG and NGGD…TPGQ.

It belongs to the mycobacterial PE family. PGRS subfamily.

This is an uncharacterized protein from Mycobacterium tuberculosis (strain CDC 1551 / Oshkosh).